The chain runs to 331 residues: L-lactate dehydrogenase A chain (331 aa).

Residues 29–57 (GMVG…MEDK) and Arg98 contribute to the NAD(+) site. Residues Arg105, Asn137, and Arg168 each contribute to the substrate site. Residue Asn137 participates in NAD(+) binding. Catalysis depends on His192, which acts as the Proton acceptor. Thr247 contributes to the substrate binding site.

It belongs to the LDH/MDH superfamily. LDH family. Homotetramer.

It localises to the cytoplasm. The enzyme catalyses (S)-lactate + NAD(+) = pyruvate + NADH + H(+). The protein operates within fermentation; pyruvate fermentation to lactate; (S)-lactate from pyruvate: step 1/1. Its function is as follows. Interconverts simultaneously and stereospecifically pyruvate and lactate with concomitant interconversion of NADH and NAD(+). The sequence is that of L-lactate dehydrogenase A chain (ldha) from Champsocephalus gunnari (Mackerel icefish).